The following is a 189-amino-acid chain: Small ribosomal subunit protein uS5 (189 aa).

Positions 22–85 (FVDKLVAINR…EAAKRDLIFV (64 aa)) constitute an S5 DRBM domain.

The protein belongs to the universal ribosomal protein uS5 family. Part of the 30S ribosomal subunit. Contacts proteins S4 and S8.

In terms of biological role, with S4 and S12 plays an important role in translational accuracy. Its function is as follows. Located at the back of the 30S subunit body where it stabilizes the conformation of the head with respect to the body. The sequence is that of Small ribosomal subunit protein uS5 from Sinorhizobium fredii (strain NBRC 101917 / NGR234).